Consider the following 651-residue polypeptide: MSAKIYPVLKSAKARTLIDNERYQKWYQESVEDPEKFWDKHGRRIDWFKPYTKVKNTSFKGRVPIKWFEDGLTNVSYNCIDRHLKTHGERTAIIWEGDNPYIDKKITYNQLYDYVCRLANVLKKHGVKKGDRVTIYMPMIPEAAYAMLACARIGAVHSVVFGGFSPEALAGRIVDCESTFVITCDEGVRGGKPIPLKENTDKAIDIAAKQYVIVNKVLVVRRTGGKTGWAPGRDIWYHQEIATVKPDCPPVKMRAEDPLFILYTSGSTGKPKGVLHTTGGYLVYTSMTHEYVFDYKDGEVFWCTADVGWVTGHSYIVYGPLANCATTLMFEGVPNFPDQGRFWEVIDKHKVNIFYTAPTALRSLMGAGDQFVQRSSRESLRLLGTVGEPINPEAWEWYYHVVGEDKSPIVDTWWQTETGGILISPLPGATDLKPGSATRPFFGVQPQLVDAEGNVLEGPADGNLCIIDSWPGQSRSVYGDHQRFVDTYFSTYKGKYFTGDGCRRDEDGYYWITGRVDDVLNVSGHRLGTAEVESALVSHHQVSEAAVVGYPHPIKGQGIYCYVTLMAGQSGDYALREELVKHVRNEIGPVATPDKIQFAPGLPKTRSGKIMRRILRKIAEDDFGALGDTSTLADPAVVEDLIANRQNRTAS.

CoA contacts are provided by residues 189 to 192, Thr-311, and Asn-335; that span reads RGGK. Residues 387–389, 411–416, Asp-500, and Arg-515 contribute to the ATP site; these read GEP and DTWWQT. Position 523 (Ser-523) interacts with CoA. Arg-526 is an ATP binding site. 3 residues coordinate Mg(2+): Val-537, His-539, and Val-542. Arg-584 contacts CoA. Position 609 is an N6-acetyllysine (Lys-609).

This sequence belongs to the ATP-dependent AMP-binding enzyme family. It depends on Mg(2+) as a cofactor. Acetylated. Deacetylation by the SIR2-homolog deacetylase activates the enzyme.

The enzyme catalyses acetate + ATP + CoA = acetyl-CoA + AMP + diphosphate. In terms of biological role, catalyzes the conversion of acetate into acetyl-CoA (AcCoA), an essential intermediate at the junction of anabolic and catabolic pathways. AcsA undergoes a two-step reaction. In the first half reaction, AcsA combines acetate with ATP to form acetyl-adenylate (AcAMP) intermediate. In the second half reaction, it can then transfer the acetyl group from AcAMP to the sulfhydryl group of CoA, forming the product AcCoA. The sequence is that of Acetyl-coenzyme A synthetase from Agrobacterium fabrum (strain C58 / ATCC 33970) (Agrobacterium tumefaciens (strain C58)).